The sequence spans 87 residues: Cell division topological specificity factor (87 aa).

It belongs to the MinE family.

Its function is as follows. Prevents the cell division inhibition by proteins MinC and MinD at internal division sites while permitting inhibition at polar sites. This ensures cell division at the proper site by restricting the formation of a division septum at the midpoint of the long axis of the cell. The chain is Cell division topological specificity factor from Clostridium botulinum (strain ATCC 19397 / Type A).